We begin with the raw amino-acid sequence, 633 residues long: Polypeptide N-acetylgalactosaminyltransferase 3 (633 aa).

At 1–19 the chain is on the cytoplasmic side; sequence MAHLKRLVKLHIKRHYHKK. Residues 20 to 37 form a helical; Signal-anchor for type II membrane protein membrane-spanning segment; sequence FWKLGAVIFFFIIVLVLM. Topologically, residues 38-633 are lumenal; sequence QREVSVQYSK…LQKWILSQND (596 aa). The N-linked (GlcNAc...) asparagine glycan is linked to Asn-132. A catalytic subdomain A region spans residues 184–293; that stretch reads LPTTSVIIVF…YGWLEPLLAR (110 aa). Asp-277 and His-279 together coordinate Mn(2+). N-linked (GlcNAc...) asparagine glycosylation is present at Asn-297. The catalytic subdomain B stretch occupies residues 356–418; the sequence is PIKTPTFAGG…PCSVVGHVFR (63 aa). His-415 is a Mn(2+) binding site. N-linked (GlcNAc...) asparagine glycosylation is present at Asn-484. The region spanning 504–630 is the Ricin B-type lectin domain; sequence VISGYIKSVG…SDPLQKWILS (127 aa). Residues Cys-517 and Cys-535 are joined by a disulfide bond. Residues Asp-519, Glu-522, His-536, and Asn-541 each coordinate UDP-N-acetyl-alpha-D-galactosamine. 2 disulfide bridges follow: Cys-561-Cys-574 and Cys-605-Cys-618.

Belongs to the glycosyltransferase 2 family. GalNAc-T subfamily. It depends on Mn(2+) as a cofactor. In terms of tissue distribution, expressed in organs that contain secretory epithelial glands. Highly expressed in pancreas, skin, kidney and testis. Weakly expressed in prostate, ovary, intestine and colon. Also expressed in placenta and lung and fetal lung and fetal kidney.

The protein localises to the golgi apparatus. Its subcellular location is the golgi stack membrane. It catalyses the reaction L-seryl-[protein] + UDP-N-acetyl-alpha-D-galactosamine = a 3-O-[N-acetyl-alpha-D-galactosaminyl]-L-seryl-[protein] + UDP + H(+). The catalysed reaction is L-threonyl-[protein] + UDP-N-acetyl-alpha-D-galactosamine = a 3-O-[N-acetyl-alpha-D-galactosaminyl]-L-threonyl-[protein] + UDP + H(+). The protein operates within protein modification; protein glycosylation. Its function is as follows. Catalyzes the initial reaction in O-linked oligosaccharide biosynthesis, the transfer of an N-acetyl-D-galactosamine residue to a serine or threonine residue on the protein receptor. Has activity toward HIV envelope glycoprotein gp120, EA2, MUC2, MUC1A and MUC5AC. Probably glycosylates fibronectin in vivo. Glycosylates FGF23. The protein is Polypeptide N-acetylgalactosaminyltransferase 3 (GALNT3) of Homo sapiens (Human).